Reading from the N-terminus, the 472-residue chain is Siroheme synthase (472 aa).

A precorrin-2 dehydrogenase /sirohydrochlorin ferrochelatase region spans residues 1–204 (MDYLPIFTKL…GQTEKAIALM (204 aa)). NAD(+) is bound by residues 22-23 (SI) and 43-44 (LE). A Phosphoserine modification is found at Ser-128. Residues 215-472 (GDVALVGAGP…SRDPFLVNLA (258 aa)) are uroporphyrinogen-III C-methyltransferase. Residue Pro-224 coordinates S-adenosyl-L-methionine. The Proton acceptor role is filled by Asp-247. Lys-269 acts as the Proton donor in catalysis. S-adenosyl-L-methionine-binding positions include 300–302 (GGD), Ile-305, 330–331 (TA), Met-382, and Gly-411.

It in the N-terminal section; belongs to the precorrin-2 dehydrogenase / sirohydrochlorin ferrochelatase family. In the C-terminal section; belongs to the precorrin methyltransferase family.

The catalysed reaction is uroporphyrinogen III + 2 S-adenosyl-L-methionine = precorrin-2 + 2 S-adenosyl-L-homocysteine + H(+). The enzyme catalyses precorrin-2 + NAD(+) = sirohydrochlorin + NADH + 2 H(+). It carries out the reaction siroheme + 2 H(+) = sirohydrochlorin + Fe(2+). It functions in the pathway cofactor biosynthesis; adenosylcobalamin biosynthesis; precorrin-2 from uroporphyrinogen III: step 1/1. It participates in cofactor biosynthesis; adenosylcobalamin biosynthesis; sirohydrochlorin from precorrin-2: step 1/1. Its pathway is porphyrin-containing compound metabolism; siroheme biosynthesis; precorrin-2 from uroporphyrinogen III: step 1/1. The protein operates within porphyrin-containing compound metabolism; siroheme biosynthesis; siroheme from sirohydrochlorin: step 1/1. It functions in the pathway porphyrin-containing compound metabolism; siroheme biosynthesis; sirohydrochlorin from precorrin-2: step 1/1. Multifunctional enzyme that catalyzes the SAM-dependent methylations of uroporphyrinogen III at position C-2 and C-7 to form precorrin-2 via precorrin-1. Then it catalyzes the NAD-dependent ring dehydrogenation of precorrin-2 to yield sirohydrochlorin. Finally, it catalyzes the ferrochelation of sirohydrochlorin to yield siroheme. The protein is Siroheme synthase of Psychromonas ingrahamii (strain DSM 17664 / CCUG 51855 / 37).